Here is a 500-residue protein sequence, read N- to C-terminus: Recombining binding protein suppressor of hairless (500 aa).

The disordered stretch occupies residues 1–30 (MDHTEGSPAEEPPAHAPSPGKFGERPPPKR). 2 DNA-binding regions span residues 57–67 (QKSYGNEKRFF) and 165–170 (SKPSKK). An N6-acetyllysine modification is found at Lys-175. A DNA-binding region spans residues 192–197 (RLRSQT). One can recognise an IPT/TIG domain in the interval 355–445 (PVVESLQLNG…YSTSLTFTYT (91 aa)). Residues 465–481 (SSQVPPNESNTNSEGSY) are compositionally biased toward polar residues. The tract at residues 465-500 (SSQVPPNESNTNSEGSYTNASTNSTSVTSSTATVVS) is disordered. A compositionally biased stretch (low complexity) spans 482 to 500 (TNASTNSTSVTSSTATVVS).

This sequence belongs to the Su(H) family. As to quaternary structure, interacts with activated NOTCH1, NOTCH2 or NOTCH3. Interacts with MINT/SHARP. This interaction may mediate the recruitment of large corepressor complexes containing proteins such as HDAC1, HDAC2, NCOR2, SAP30, FHL1/KYOT2 and CIR1. Interacts with EP300, MAML1 and PTF1A. Interacts with RITA1/C12orf52, leading to nuclear export, prevent the interaction between RBPJ and NICD product and subsequent down-regulation of the Notch signaling pathway. Interacts with SNW1. Interacts with CHCHD2 and CXXC5. Interacts with BEND6 (via BEN domain). Interacts with NKAPL. Interacts with ZMIZ1. Interacts with RBM15. Interacts with L3MBTL3 and KDM1A; the interaction with KDM1A is weaker in the absence of L3MBTL3 and the interaction with L3MBTL3 is impaired by Notch-derived peptide containing the intracellular domain (NICD). In terms of assembly, (Microbial infection) Interacts with EBV EBNA2. Interacts with EBV EBNA3. Interacts with EBV EBNA4. Interacts with EBV EBNA6 (via N-terminus).

It is found in the nucleus. Its subcellular location is the cytoplasm. Transcriptional regulator that plays a central role in Notch signaling, a signaling pathway involved in cell-cell communication that regulates a broad spectrum of cell-fate determinations. Acts as a transcriptional repressor when it is not associated with Notch proteins. When associated with some NICD product of Notch proteins (Notch intracellular domain), it acts as a transcriptional activator that activates transcription of Notch target genes. Probably represses or activates transcription via the recruitment of chromatin remodeling complexes containing histone deacetylase or histone acetylase proteins, respectively. Specifically binds to the immunoglobulin kappa-type J segment recombination signal sequence. Binds specifically to methylated DNA. Binds to the oxygen responsive element of COX4I2 and activates its transcription under hypoxia conditions (4% oxygen). Negatively regulates the phagocyte oxidative burst in response to bacterial infection by repressing transcription of NADPH oxidase subunits. In Homo sapiens (Human), this protein is Recombining binding protein suppressor of hairless.